The primary structure comprises 352 residues: Tropomodulin-3 (352 aa).

Residue serine 25 is modified to Phosphoserine.

The protein belongs to the tropomodulin family. Binds to the N-terminus of tropomyosin and to actin. Interacts with FLII. In terms of tissue distribution, ubiquitous.

It localises to the cytoplasm. It is found in the cytoskeleton. In terms of biological role, blocks the elongation and depolymerization of the actin filaments at the pointed end. The Tmod/TM complex contributes to the formation of the short actin protofilament, which in turn defines the geometry of the membrane skeleton. This Mus musculus (Mouse) protein is Tropomodulin-3 (Tmod3).